A 195-amino-acid polypeptide reads, in one-letter code: MPLHIDAVILAGGMARRMGGDDKGLVELNGQPMIKHTIDRIKPQVKEILINANRNQTRYAEFGFKVISDEHSGFLGPLAGMLAALGQTKADYLLTVPCDSPQLPMDLVERMLNAIETKGADMAVASNGEQEQPVVLLMKPSLRDSMEAFLKAGDRKILLWYAKQNYAVATFADQPNAFMNINTLEEKQQFALDQT.

Residues 10–12 (LAG), K23, N51, D69, and D99 contribute to the GTP site. Residue D99 participates in Mg(2+) binding.

It belongs to the MobA family. As to quaternary structure, monomer. Mg(2+) serves as cofactor.

Its subcellular location is the cytoplasm. It catalyses the reaction Mo-molybdopterin + GTP + H(+) = Mo-molybdopterin guanine dinucleotide + diphosphate. Transfers a GMP moiety from GTP to Mo-molybdopterin (Mo-MPT) cofactor (Moco or molybdenum cofactor) to form Mo-molybdopterin guanine dinucleotide (Mo-MGD) cofactor. This chain is Molybdenum cofactor guanylyltransferase, found in Shewanella putrefaciens (strain CN-32 / ATCC BAA-453).